Reading from the N-terminus, the 476-residue chain is Ribulose bisphosphate carboxylase large chain (476 aa).

Residues 1–2 constitute a propeptide that is removed on maturation; it reads MS. The residue at position 3 (P3) is an N-acetylproline. At K14 the chain carries N6,N6,N6-trimethyllysine. Residues N123 and T173 each coordinate substrate. K175 acts as the Proton acceptor in catalysis. Residue K177 participates in substrate binding. The Mg(2+) site is built by K201, D203, and E204. K201 carries the N6-carboxylysine modification. Positions 295, 327, and 379 each coordinate substrate.

This sequence belongs to the RuBisCO large chain family. Type I subfamily. Heterohexadecamer of 8 large chains and 8 small chains; disulfide-linked. The disulfide link is formed within the large subunit homodimers. It depends on Mg(2+) as a cofactor. In terms of processing, the disulfide bond which can form in the large chain dimeric partners within the hexadecamer appears to be associated with oxidative stress and protein turnover.

Its subcellular location is the plastid. It is found in the chloroplast. It carries out the reaction 2 (2R)-3-phosphoglycerate + 2 H(+) = D-ribulose 1,5-bisphosphate + CO2 + H2O. The enzyme catalyses D-ribulose 1,5-bisphosphate + O2 = 2-phosphoglycolate + (2R)-3-phosphoglycerate + 2 H(+). Its function is as follows. RuBisCO catalyzes two reactions: the carboxylation of D-ribulose 1,5-bisphosphate, the primary event in carbon dioxide fixation, as well as the oxidative fragmentation of the pentose substrate in the photorespiration process. Both reactions occur simultaneously and in competition at the same active site. The chain is Ribulose bisphosphate carboxylase large chain from Barnadesia caryophylla (Xenophontia caryophylla).